The sequence spans 113 residues: Immunoglobulin lambda variable 2-23 (113 aa).

Positions 1–19 are cleaved as a signal peptide; that stretch reads MAWALLLLTLLTQDTGSWA. A Pyrrolidone carboxylic acid modification is found at Gln-20. The segment at 20–44 is framework-1; it reads QSALTQPASVSGSPGQSITISCTGT. Residues 20–113 form the Ig-like domain; sequence QSALTQPASV…EADYYCCSYA (94 aa). Cysteines 41 and 109 form a disulfide. The segment at 45 to 53 is complementarity-determining-1; the sequence is SSDVGSYNL. The interval 54–70 is framework-2; that stretch reads VSWYQQHPGKAPKLMIY. The complementarity-determining-2 stretch occupies residues 71 to 73; the sequence is EGS. Residues 73 to 92 are disordered; that stretch reads SKRPSGVSNRFSGSKSGNTA. The interval 74 to 109 is framework-3; that stretch reads KRPSGVSNRFSGSKSGNTASLTISGLQAEDEADYYC. Over residues 78–92 the composition is skewed to polar residues; that stretch reads GVSNRFSGSKSGNTA. Residues 110–113 are complementarity-determining-3; the sequence is CSYA.

As to quaternary structure, immunoglobulins are composed of two identical heavy chains and two identical light chains; disulfide-linked.

It localises to the secreted. Its subcellular location is the cell membrane. Functionally, v region of the variable domain of immunoglobulin light chains that participates in the antigen recognition. Immunoglobulins, also known as antibodies, are membrane-bound or secreted glycoproteins produced by B lymphocytes. In the recognition phase of humoral immunity, the membrane-bound immunoglobulins serve as receptors which, upon binding of a specific antigen, trigger the clonal expansion and differentiation of B lymphocytes into immunoglobulins-secreting plasma cells. Secreted immunoglobulins mediate the effector phase of humoral immunity, which results in the elimination of bound antigens. The antigen binding site is formed by the variable domain of one heavy chain, together with that of its associated light chain. Thus, each immunoglobulin has two antigen binding sites with remarkable affinity for a particular antigen. The variable domains are assembled by a process called V-(D)-J rearrangement and can then be subjected to somatic hypermutations which, after exposure to antigen and selection, allow affinity maturation for a particular antigen. The chain is Immunoglobulin lambda variable 2-23 from Homo sapiens (Human).